A 375-amino-acid polypeptide reads, in one-letter code: Queuine tRNA-ribosyltransferase (375 aa).

Asp89 functions as the Proton acceptor in the catalytic mechanism. Residues 89–93 (DSGGF), Asp143, Gln187, and Gly214 each bind substrate. The tract at residues 245–251 (GVGKPED) is RNA binding. Asp264 functions as the Nucleophile in the catalytic mechanism. The RNA binding; important for wobble base 34 recognition stretch occupies residues 269–273 (TRNAR). Residues Cys302, Cys304, Cys307, and His333 each coordinate Zn(2+).

This sequence belongs to the queuine tRNA-ribosyltransferase family. Homodimer. Within each dimer, one monomer is responsible for RNA recognition and catalysis, while the other monomer binds to the replacement base PreQ1. Zn(2+) serves as cofactor.

The enzyme catalyses 7-aminomethyl-7-carbaguanine + guanosine(34) in tRNA = 7-aminomethyl-7-carbaguanosine(34) in tRNA + guanine. Its pathway is tRNA modification; tRNA-queuosine biosynthesis. Its function is as follows. Catalyzes the base-exchange of a guanine (G) residue with the queuine precursor 7-aminomethyl-7-deazaguanine (PreQ1) at position 34 (anticodon wobble position) in tRNAs with GU(N) anticodons (tRNA-Asp, -Asn, -His and -Tyr). Catalysis occurs through a double-displacement mechanism. The nucleophile active site attacks the C1' of nucleotide 34 to detach the guanine base from the RNA, forming a covalent enzyme-RNA intermediate. The proton acceptor active site deprotonates the incoming PreQ1, allowing a nucleophilic attack on the C1' of the ribose to form the product. After dissociation, two additional enzymatic reactions on the tRNA convert PreQ1 to queuine (Q), resulting in the hypermodified nucleoside queuosine (7-(((4,5-cis-dihydroxy-2-cyclopenten-1-yl)amino)methyl)-7-deazaguanosine). In Aliivibrio fischeri (strain ATCC 700601 / ES114) (Vibrio fischeri), this protein is Queuine tRNA-ribosyltransferase.